The chain runs to 374 residues: Homeobox protein knotted-1-like 13 (374 aa).

The disordered stretch occupies residues 214-242; sequence TGASPGEGTGATMSDGEDDQADSEANMYD. The ELK domain maps to 270-290; the sequence is ELKHELKQGYKEKLIDIREEI. The homeobox; TALE-type DNA-binding region spans 291–354; sequence LRKRRAGKLP…NQRKRNWHSN (64 aa). The segment at 347-374 is disordered; sequence RKRNWHSNPSSSTSVKTKRKSNAGDNNS.

The protein belongs to the TALE/KNOX homeobox family. Isoforms 1 and 2 are expressed in roots, stems, shoot meristem, leaf blades, leaf sheaths and flowers. Isoform 3 is expressed in stems, shoot meristem, rachis, leaf blades and leaf sheaths.

It is found in the nucleus. In terms of biological role, isoform 3 acts as a transcription activator, but isoforms 1 and 2 do not. The chain is Homeobox protein knotted-1-like 13 (OSH45) from Oryza sativa subsp. japonica (Rice).